A 498-amino-acid chain; its full sequence is U4/U6 small nuclear ribonucleoprotein Prp31 (498 aa).

Positions 1 to 24 (MSLADELLADLEEAAEEEEENLID) are disordered. Positions 7–24 (LLADLEEAAEEEEENLID) are enriched in acidic residues. 2 coiled-coil regions span residues 84–119 (EAAP…KYSK) and 180–214 (DEEL…MSFI). The region spanning 214–332 (IAPNLSIIVG…IERKFDKWQE (119 aa)) is the Nop domain. The segment at 333–356 (PPPVKQVKPLPAPLDGQRKKRGGR) is disordered. The short motif at 350–363 (RKKRGGRRYRKMKE) is the Nuclear localization signal (NLS) element.

The protein belongs to the PRP31 family. As to quaternary structure, identified in the spliceosome B complex. Component of the U4/U6-U5 tri-snRNP complex. Component of some MLL1/MLL complex.

The protein resides in the nucleus. It localises to the nucleus speckle. Its subcellular location is the cajal body. Its function is as follows. Involved in pre-mRNA splicing as component of the spliceosome. Required for the assembly of the U4/U5/U6 tri-snRNP complex, one of the building blocks of the spliceosome. In Xenopus laevis (African clawed frog), this protein is U4/U6 small nuclear ribonucleoprotein Prp31 (prpf31).